The sequence spans 149 residues: Large ribosomal subunit protein bL9 (149 aa).

Belongs to the bacterial ribosomal protein bL9 family.

Binds to the 23S rRNA. The protein is Large ribosomal subunit protein bL9 of Cutibacterium acnes (strain DSM 16379 / KPA171202) (Propionibacterium acnes).